The sequence spans 497 residues: Alkane hydroxylase MAH1 (497 aa).

The helical transmembrane segment at 3-23 (MLGFYVTFIFFLVCLFTYFFL) threads the bilayer. Residue C444 participates in heme binding.

The protein belongs to the cytochrome P450 family. Heme is required as a cofactor. In terms of tissue distribution, expressed in the expanding regions of the inflorescence stems, specifically to the epidermal pavement cells, petioles and siliques.

It is found in the endoplasmic reticulum membrane. In terms of biological role, involved in the formation of secondary alcohols and ketones in stem cuticular wax. Catalyzes the hydroxylation of a methylene unit in the middle of alkane molecules to form secondary alcohols and possibly also a second hydroxylation leading to the corresponding ketones. In Arabidopsis thaliana (Mouse-ear cress), this protein is Alkane hydroxylase MAH1.